The chain runs to 181 residues: Ribonuclease HII (181 aa).

One can recognise an RNase H type-2 domain in the interval 1 to 181 (MICGIDEVGR…SLHRKNFKLI (181 aa)). The a divalent metal cation site is built by Asp6, Glu7, and Asp98.

Belongs to the RNase HII family. Mn(2+) serves as cofactor. Requires Mg(2+) as cofactor.

Its subcellular location is the cytoplasm. The catalysed reaction is Endonucleolytic cleavage to 5'-phosphomonoester.. In terms of biological role, endonuclease that specifically degrades the RNA of RNA-DNA hybrids. This is Ribonuclease HII (rnhB) from Borreliella burgdorferi (strain ATCC 35210 / DSM 4680 / CIP 102532 / B31) (Borrelia burgdorferi).